The chain runs to 96 residues: Acylphosphatase (96 aa).

The Acylphosphatase-like domain maps to 4-91 (RVHVYVKGKV…GEFDDFRILY (88 aa)). Active-site residues include R19 and N37.

It belongs to the acylphosphatase family.

It catalyses the reaction an acyl phosphate + H2O = a carboxylate + phosphate + H(+). The sequence is that of Acylphosphatase (acyP) from Syntrophus aciditrophicus (strain SB).